The chain runs to 460 residues: Argininosuccinate lyase (460 aa).

The protein belongs to the lyase 1 family. Argininosuccinate lyase subfamily.

It is found in the cytoplasm. The enzyme catalyses 2-(N(omega)-L-arginino)succinate = fumarate + L-arginine. It participates in amino-acid biosynthesis; L-arginine biosynthesis; L-arginine from L-ornithine and carbamoyl phosphate: step 3/3. This Buchnera aphidicola subsp. Cinara cedri (strain Cc) protein is Argininosuccinate lyase.